A 58-amino-acid chain; its full sequence is Large ribosomal subunit protein bL32 (58 aa).

Belongs to the bacterial ribosomal protein bL32 family.

The protein is Large ribosomal subunit protein bL32 of Staphylococcus aureus (strain NCTC 8325 / PS 47).